We begin with the raw amino-acid sequence, 1172 residues long: MRPFFLLCFALPGLLHAQQACSRGACYPPVGDLLVGRTRFLRASSTCGLTKPETYCTQYGEWQMKCCKCDSRQPHNYYSHRVENVASSSGPMRWWQSQNDVNPVSLQLDLDRRFQLQEVMMEFQGPMPAGMLIERSSDFGKTWRVYQYLAADCTSTFPRVRQGRPQSWQDVRCQSLPQRPNARLNGGKVQLNLMDLVSGIPATQSQKIQEVGEITNLRVNFTRLAPVPQRGYHPPSAYYAVSQLRLQGSCFCHGHADRCAPKPGASAGPSTAVQVHDVCVCQHNTAGPNCERCAPFYNNRPWRPAEGQDAHECQRCDCNGHSETCHFDPAVFAASQGAYGGVCDNCRDHTEGKNCERCQLHYFRNRRPGASIQETCISCECDPDGAVPGAPCDPVTGQCVCKEHVQGERCDLCKPGFTGLTYANPQGCHRCDCNILGSRRDMPCDEESGRCLCLPNVVGPKCDQCAPYHWKLASGQGCEPCACDPHNSLSPQCNQFTGQCPCREGFGGLMCSAAAIRQCPDRTYGDVATGCRACDCDFRGTEGPGCDKASGRCLCRPGLTGPRCDQCQRGYCNRYPVCVACHPCFQTYDADLREQALRFGRLRNATASLWSGPGLEDRGLASRILDAKSKIEQIRAVLSSPAVTEQEVAQVASAILSLRRTLQGLQLDLPLEEETLSLPRDLESLDRSFNGLLTMYQRKREQFEKISSADPSGAFRMLSTAYEQSAQAAQQVSDSSRLLDQLRDSRREAERLVRQAGGGGGTGSPKLVALRLEMSSLPDLTPTFNKLCGNSRQMACTPISCPGELCPQDNGTACGSRCRGVLPRAGGAFLMAGQVAEQLRGFNAQLQRTRQMIRAAEESASQIQSSAQRLETQVSASRSQMEEDVRRTRLLIQQVRDFLTDPDTDAATIQEVSEAVLALWLPTDSATVLQKMNEIQAIAARLPNVDLVLSQTKQDIARARRLQAEAEEARSRAHAVEGQVEDVVGNLRQGTVALQEAQDTMQGTSRSLRLIQDRVAEVQQVLRPAEKLVTSMTKQLGDFWTRMEELRHQARQQGAEAVQAQQLAEGASEQALSAQEGFERIKQKYAELKDRLGQSSMLGEQGARIQSVKTEAEELFGETMEMMDRMKDMELELLRGSQAIMLRSADLTGLEKRVEQIRDHINGRVLYYATCK.

An N-terminal signal peptide occupies residues 1-17 (MRPFFLLCFALPGLLHA). Residues 22-249 (SRGACYPPVG…AVSQLRLQGS (228 aa)) form the Laminin N-terminal domain. An N-linked (GlcNAc...) asparagine glycan is attached at Asn-220. Disulfide bonds link Cys-250/Cys-259, Cys-252/Cys-279, Cys-281/Cys-290, Cys-293/Cys-313, Cys-316/Cys-325, Cys-318/Cys-343, Cys-346/Cys-355, Cys-358/Cys-376, Cys-379/Cys-392, Cys-381/Cys-399, Cys-401/Cys-410, Cys-413/Cys-428, Cys-431/Cys-444, Cys-433/Cys-451, Cys-453/Cys-462, Cys-465/Cys-478, Cys-481/Cys-493, Cys-483/Cys-500, Cys-502/Cys-511, Cys-519/Cys-531, Cys-534/Cys-546, Cys-536/Cys-553, Cys-555/Cys-564, and Cys-567/Cys-578. 6 Laminin EGF-like domains span residues 250 to 315 (CFCH…ECQR), 316 to 378 (CDCN…TCIS), 379 to 430 (CECD…GCHR), 431 to 480 (CDCN…GCEP), 481 to 533 (CACD…GCRA), and 534 to 580 (CDCD…VCVA). The segment at 579–785 (VACHPCFQTY…SLPDLTPTFN (207 aa)) is domain II. An N-linked (GlcNAc...) asparagine glycan is attached at Asn-604. A coiled-coil region spans residues 723–757 (EQSAQAAQQVSDSSRLLDQLRDSRREAERLVRQAG). The interval 786–816 (KLCGNSRQMACTPISCPGELCPQDNGTACGS) is domain alpha. Residue Asn-810 is glycosylated (N-linked (GlcNAc...) asparagine). Residues 817–1170 (RCRGVLPRAG…INGRVLYYAT (354 aa)) form a domain I region. Coiled coils occupy residues 831–884 (MAGQ…MEED) and 948–1133 (VLSQ…ELEL).

As to quaternary structure, laminin is a complex glycoprotein, consisting of three different polypeptide chains (alpha, beta, gamma), which are bound to each other by disulfide bonds into a cross-shaped molecule comprising one long and three short arms with globules at each end. Beta-3 is a subunit of laminin-5 (laminin-332 or epiligrin/kalinin/nicein). Interacts with ECM1. Found in the basement membranes (major component).

The protein resides in the secreted. It is found in the extracellular space. Its subcellular location is the extracellular matrix. It localises to the basement membrane. In terms of biological role, binding to cells via a high affinity receptor, laminin is thought to mediate the attachment, migration and organization of cells into tissues during embryonic development by interacting with other extracellular matrix components. The protein is Laminin subunit beta-3 (LAMB3) of Homo sapiens (Human).